A 164-amino-acid polypeptide reads, in one-letter code: Microfibrillar-associated protein 5 (164 aa).

The signal sequence occupies residues 1-28; sequence MLFLGQKALLLVLAISIPSDWLPLGVSG. Positions 30-32 match the Cell attachment site motif; the sequence is RGD. The N-linked (GlcNAc...) asparagine glycan is linked to Asn70.

This sequence belongs to the MFAP family. Interacts with TGFB2. Interacts with BMP2. Interacts with FBN1 (via N-terminal domain) and FBN2. Forms intermolecular disulfide bonds either with other MAGP-2 molecules or with other components of the microfibrils.

Its subcellular location is the secreted. The protein resides in the extracellular space. It localises to the extracellular matrix. Functionally, may play a role in hematopoiesis. In the cardiovascular system, could regulate growth factors or participate in cell signaling in maintaining large vessel integrity. Component of the elastin-associated microfibrils. The chain is Microfibrillar-associated protein 5 (Mfap5) from Mus musculus (Mouse).